The chain runs to 491 residues: Peptidoglycan D,D-transpeptidase PbpA (491 aa).

Residues 1–8 (MNTSLRRV) are Cytoplasmic-facing. The helical; Signal-anchor for type II membrane protein transmembrane segment at 9 to 29 (AVAIMVLIVLLLANATVTQVF) threads the bilayer. Topologically, residues 30-491 (AADGLRADPR…TIAAALREGS (462 aa)) are periplasmic. The tract at residues 160-484 (GSVVALEPST…AAPIGRATIA (325 aa)) is transpeptidase. Catalysis depends on Ser222, which acts as the Acyl-ester intermediate.

This sequence belongs to the transpeptidase family.

It is found in the cell inner membrane. It catalyses the reaction Preferential cleavage: (Ac)2-L-Lys-D-Ala-|-D-Ala. Also transpeptidation of peptidyl-alanyl moieties that are N-acyl substituents of D-alanine.. It participates in cell wall biogenesis; peptidoglycan biosynthesis. Transpeptidase that catalyzes cross-linking of the peptidoglycan cell wall. Required for the regulation of cell length. The chain is Peptidoglycan D,D-transpeptidase PbpA (pbpA) from Mycolicibacterium smegmatis (strain ATCC 700084 / mc(2)155) (Mycobacterium smegmatis).